The chain runs to 438 residues: Protein SPMIP7 (438 aa).

Testis-specific.

Essential for normal spermatogenesis. The polypeptide is Protein SPMIP7 (Homo sapiens (Human)).